Here is a 782-residue protein sequence, read N- to C-terminus: Cleavage and polyadenylation specificity factor subunit 2 (782 aa).

The span at 407 to 416 (KKLEQSKEAD) shows a compositional bias: basic and acidic residues. The disordered stretch occupies residues 407–449 (KKLEQSKEADIDSSDESDIEEDIDQPSAHKTKHDLMMKGEGSR). Positions 417–430 (IDSSDESDIEEDID) are enriched in acidic residues. S419, S420, and S423 each carry phosphoserine. Over residues 439-449 (HDLMMKGEGSR) the composition is skewed to basic and acidic residues. S660 carries the post-translational modification Phosphoserine.

It belongs to the metallo-beta-lactamase superfamily. RNA-metabolizing metallo-beta-lactamase-like family. CPSF2/YSH1 subfamily. In terms of assembly, component of the cleavage and polyadenylation specificity factor (CPSF) complex, composed of CPSF1, CPSF2, CPSF3, CPSF4 and FIP1L1. Interacts with CPSF3, CSTF2 and SYMPK. Interacts with ZC3H3.

The protein localises to the nucleus. Functionally, component of the cleavage and polyadenylation specificity factor (CPSF) complex that play a key role in pre-mRNA 3'-end formation, recognizing the AAUAAA signal sequence and interacting with poly(A) polymerase and other factors to bring about cleavage and poly(A) addition. Involved in the histone 3' end pre-mRNA processing. This Homo sapiens (Human) protein is Cleavage and polyadenylation specificity factor subunit 2 (CPSF2).